We begin with the raw amino-acid sequence, 267 residues long: Thiazole synthase (267 aa).

The active-site Schiff-base intermediate with DXP is the Lys101. Residues Gly162, 188-189 (AG), and 210-211 (NT) contribute to the 1-deoxy-D-xylulose 5-phosphate site. Residues 247 to 267 (HASPSSPAAGVPCLPDPEVPV) form a disordered region.

Belongs to the ThiG family. As to quaternary structure, homotetramer. Forms heterodimers with either ThiH or ThiS.

The protein localises to the cytoplasm. It catalyses the reaction [ThiS sulfur-carrier protein]-C-terminal-Gly-aminoethanethioate + 2-iminoacetate + 1-deoxy-D-xylulose 5-phosphate = [ThiS sulfur-carrier protein]-C-terminal Gly-Gly + 2-[(2R,5Z)-2-carboxy-4-methylthiazol-5(2H)-ylidene]ethyl phosphate + 2 H2O + H(+). It functions in the pathway cofactor biosynthesis; thiamine diphosphate biosynthesis. Catalyzes the rearrangement of 1-deoxy-D-xylulose 5-phosphate (DXP) to produce the thiazole phosphate moiety of thiamine. Sulfur is provided by the thiocarboxylate moiety of the carrier protein ThiS. In vitro, sulfur can be provided by H(2)S. The sequence is that of Thiazole synthase from Deinococcus geothermalis (strain DSM 11300 / CIP 105573 / AG-3a).